A 274-amino-acid polypeptide reads, in one-letter code: Bis(5'-nucleosyl)-tetraphosphatase, symmetrical (274 aa).

Belongs to the Ap4A hydrolase family.

It carries out the reaction P(1),P(4)-bis(5'-adenosyl) tetraphosphate + H2O = 2 ADP + 2 H(+). Its function is as follows. Hydrolyzes diadenosine 5',5'''-P1,P4-tetraphosphate to yield ADP. This chain is Bis(5'-nucleosyl)-tetraphosphatase, symmetrical, found in Shewanella baltica (strain OS223).